Consider the following 546-residue polypeptide: Flavin-dependent oxygenase ucdF (546 aa).

In terms of domain architecture, FAD-binding PCMH-type spans 81 to 263; sequence QGRIPYYAVM…VNTTIRTFPD (183 aa).

Belongs to the oxygen-dependent FAD-linked oxidoreductase family.

Nonribosomal peptide synthetase that mediates the biosynthesis of usterphenyllins and uscandidusins, p-terphenyl derivatives. The function of ucdF within the pathway still remains to be determined. UcdE further prenylates position C-14 of ring C of usterphenyllin B to form usterphenyllin A. The pathway begin with the biosynthesis of 4-hydroxyphenylpyruvate (HPPA) from L-tyrosine, possibly by the aminotransferase ucdG. The nonribosomal peptide synthetase ucdA then condenses two HPPA units to produce atromentin. The key step in this pathway is the reduction and dehydration of atromentin to form a terphenyl triol intermediate, performed by the NAD-dependent dehydrogenase ucdB. Further O-methylation by the methyltransferase ucdC forms terphenyllin carrying two methoxy moieties at C-9 and C-12, and subsequent dihydroxylation at C-3 of ring A and C-15 of ring C by the flavin-dependent oxygenase ucdD leads to 3,15-dihydroxyterphenyllin. Prenylation by ucdE at position C-5 of ring A forms usterphenyllin B, and is followed by a second prenylation at position C-14 of ring C to form usterphenyllin A. The following furan ring formation that leads to uscandidusins A and B was proven to be an unexpected spontaneous non-enzymatic reaction. The polypeptide is Flavin-dependent oxygenase ucdF (Aspergillus ustus).